The chain runs to 208 residues: ATP-dependent Clp protease proteolytic subunit (208 aa).

Ser-105 functions as the Nucleophile in the catalytic mechanism. His-130 is an active-site residue.

This sequence belongs to the peptidase S14 family. In terms of assembly, fourteen ClpP subunits assemble into 2 heptameric rings which stack back to back to give a disk-like structure with a central cavity, resembling the structure of eukaryotic proteasomes.

It localises to the cytoplasm. The enzyme catalyses Hydrolysis of proteins to small peptides in the presence of ATP and magnesium. alpha-casein is the usual test substrate. In the absence of ATP, only oligopeptides shorter than five residues are hydrolyzed (such as succinyl-Leu-Tyr-|-NHMec, and Leu-Tyr-Leu-|-Tyr-Trp, in which cleavage of the -Tyr-|-Leu- and -Tyr-|-Trp bonds also occurs).. In terms of biological role, cleaves peptides in various proteins in a process that requires ATP hydrolysis. Has a chymotrypsin-like activity. Plays a major role in the degradation of misfolded proteins. This is ATP-dependent Clp protease proteolytic subunit from Xanthomonas campestris pv. campestris (strain 8004).